The sequence spans 357 residues: MAEITAAMVKELRESTGAGMMDCKNALSETNGDFDKAVQLLREKGLGKAAKKADRLAAEGLVSVKVSDDFTSATVSEINSETDFVAKNDQFIALTKDTTAHIQSNSLQSVEELHSSTINGVKFEEYLKSQIATIGENLVVRRFATLKAGANGVVNGYIHTNGRVGVVIAAACDSTEVASKSRDLLRQICMHIAAMRPSYLSYEDLDMTFVENEYKALVAELEKENEERRRLKDPNKPEHKIPQFASRKQLSDAILKEAEEKIKEELKAQGKPEKIWDNIIPGKMNSFIADNSQLDSKLTLMGQFYVLDDKKTVEQVIAEKEKEFGGKIKIVEFICFEVGEGLEKKTEDFAAEVAAQL.

The segment at 82 to 85 is involved in Mg(2+) ion dislocation from EF-Tu; that stretch reads TDFV.

The protein belongs to the EF-Ts family.

It localises to the cytoplasm. Associates with the EF-Tu.GDP complex and induces the exchange of GDP to GTP. It remains bound to the aminoacyl-tRNA.EF-Tu.GTP complex up to the GTP hydrolysis stage on the ribosome. This is Elongation factor Ts from Campylobacter jejuni (strain RM1221).